Reading from the N-terminus, the 338-residue chain is ATP synthase subunit a (338 aa).

Residues 15 to 35 (IAVLVMPLLLGFGAPIYAAAE) form a helical membrane-spanning segment. A disordered region spans residues 45–66 (AAAVHTDEAHGEAGEHAEGGHG). The span at 49-65 (HTDEAHGEAGEHAEGGH) shows a compositional bias: basic and acidic residues. The next 7 membrane-spanning stretches (helical) occupy residues 109-129 (HVVF…YVGN), 174-194 (LLTV…PYGA), 199-219 (NINV…VSAI), 238-258 (ALWI…PFAL), 262-282 (LFAN…ISFI), 287-307 (IVAI…EIFV), and 308-328 (SFLQ…LGSA).

It belongs to the ATPase A chain family. F-type ATPases have 2 components, CF(1) - the catalytic core - and CF(0) - the membrane proton channel. CF(1) has five subunits: alpha(3), beta(3), gamma(1), delta(1), epsilon(1). CF(0) has four main subunits: a, b, b' and c.

The protein localises to the cell inner membrane. Functionally, key component of the proton channel; it plays a direct role in the translocation of protons across the membrane. The chain is ATP synthase subunit a from Chlorobium phaeobacteroides (strain BS1).